The sequence spans 255 residues: uncharacterized protein (255 aa).

Residues Asn16 and Asn58 are each glycosylated (N-linked (GlcNAc...) asparagine; by host). Helical transmembrane passes span 72–92 (LIYS…TIYY) and 104–124 (LWYI…SHIC).

The protein localises to the membrane. This is an uncharacterized protein from Acanthamoeba polyphaga (Amoeba).